The primary structure comprises 402 residues: Pyridinium-3,5-bisthiocarboxylic acid mononucleotide nickel insertion protein (402 aa).

The protein belongs to the LarC family.

The enzyme catalyses Ni(II)-pyridinium-3,5-bisthiocarboxylate mononucleotide = pyridinium-3,5-bisthiocarboxylate mononucleotide + Ni(2+). In terms of biological role, involved in the biosynthesis of a nickel-pincer cofactor ((SCS)Ni(II) pincer complex). Binds Ni(2+), and functions in nickel delivery to pyridinium-3,5-bisthiocarboxylic acid mononucleotide (P2TMN), to form the mature cofactor. Is thus probably required for the activation of nickel-pincer cofactor-dependent enzymes. The sequence is that of Pyridinium-3,5-bisthiocarboxylic acid mononucleotide nickel insertion protein from Thermotoga sp. (strain RQ2).